Reading from the N-terminus, the 657-residue chain is Translation factor GUF1, mitochondrial (657 aa).

The transit peptide at 1-39 (MRGCLQSVKWLTSALRPSQSLASSTRYPRRLLSTSAPRN) directs the protein to the mitochondrion. Residues 59–239 (ERFRNFCIVA…TVIEQIPAPV (181 aa)) enclose the tr-type G domain. GTP-binding positions include 68 to 75 (AHVDHGKS), 132 to 136 (DTPGH), and 186 to 189 (NKVD).

This sequence belongs to the TRAFAC class translation factor GTPase superfamily. Classic translation factor GTPase family. LepA subfamily.

It localises to the mitochondrion inner membrane. The enzyme catalyses GTP + H2O = GDP + phosphate + H(+). Promotes mitochondrial protein synthesis. May act as a fidelity factor of the translation reaction, by catalyzing a one-codon backward translocation of tRNAs on improperly translocated ribosomes. Binds to mitochondrial ribosomes in a GTP-dependent manner. This is Translation factor GUF1, mitochondrial from Ajellomyces capsulatus (strain G186AR / H82 / ATCC MYA-2454 / RMSCC 2432) (Darling's disease fungus).